Here is a 1388-residue protein sequence, read N- to C-terminus: Collagen alpha-1(XV) chain (1388 aa).

An N-terminal signal peptide occupies residues 1-27 (MAPRRNNGQCWCLLMLLSVSTPLPAVT). The Laminin G-like domain occupies 66-249 (AYSFGPGANV…SSASGETSGL (184 aa)). A disordered region spans residues 223–250 (TVHPDPRTPEELCDPEESSASGETSGLQ). A nonhelical region 1 (NC1) region spans residues 229–555 (RTPEELCDPE…WITPAQREHV (327 aa)). A compositionally biased stretch (polar residues) spans 240-249 (SSASGETSGL). O-linked (Xyl...) (chondroitin sulfate) serine glycans are attached at residues S243 and S247. The O-linked (GalNAc...) threonine glycan is linked to T265. The interval 266–301 (QASPKEAKVEPINTPPTPSSPFEDMELSGEPVPEGT) is disordered. N306 and N324 each carry an N-linked (GlcNAc...) asparagine glycan. An O-linked (Xyl...) (chondroitin sulfate) serine glycan is attached at S343. 4 tandem repeats follow at residues 358 to 408 (AATA…EERL), 409 to 459 (AATA…EDSL), 460 to 509 (TTAA…EEDL), and 510 to 555 (AAAT…REHV). The segment at 358–555 (AATAAGLAEV…WITPAQREHV (198 aa)) is 4 X tandem repeats. Positions 371 to 795 (TAGEAEASSV…VGPPGPRGPP (425 aa)) are disordered. Residues 379–392 (SVPTGGPTLSMSTE) are compositionally biased toward polar residues. The span at 409–420 (AATAAGEAEALA) shows a compositional bias: low complexity. Residues 452–472 (GPSSEDSLTTAAAATEVSLST) are compositionally biased toward polar residues. Residues 510–527 (AAATTEEPLITAGGEESG) are compositionally biased toward low complexity. Residues 528–540 (SPPPDGPPLPLPT) are compositionally biased toward pro residues. The tract at residues 556 to 573 (GMKGQAGPKGEKGDAGEE) is triple-helical region 1 (COL1). The interval 574-618 (LPGPPEPSGPVGPTAGAEAEGSGLGWGSDVGSGSGDLVGSEQLLR) is nonhelical region 2 (NC2). Residues 595–609 (SGLGWGSDVGSGSGD) are compositionally biased toward gly residues. Collagen-like domains lie at 619–680 (GPPG…MKGE) and 681–731 (KGAR…PPGP). The segment at 619 to 732 (GPPGPPGPPG…PGPPGPPGPG (114 aa)) is triple-helical region 2 (COL2). Over residues 620–630 (PPGPPGPPGLP) the composition is skewed to pro residues. N687 is a glycosylation site (N-linked (GlcNAc...) asparagine). The segment covering 716–731 (VMGPPGPPGPPGPPGP) has biased composition (pro residues). The tract at residues 733–763 (CTMGLGFEDTEGSGSTQLLNEPKLSRPTAAI) is nonhelical region 3 (NC3). A glycan (O-linked (Xyl...) (chondroitin sulfate) serine) is linked at S745. The tract at residues 764–798 (GLKGEKGDRGPKGERGMDGASIVGPPGPRGPPGHI) is triple-helical region 3 (COL3). A compositionally biased stretch (basic and acidic residues) spans 766–780 (KGEKGDRGPKGERGM). Residues 799–822 (KVLSNSLINITHGFMNFSDIPELV) are nonhelical region 4 (NC4). Residues N807 and N814 are each glycosylated (N-linked (GlcNAc...) asparagine). Positions 823-865 (GPPGPDGLPGLPGFPGPRGPKGDTGLPGFPGLKGEQGEKGEPG) constitute a Collagen-like 3 domain. Residues 823–867 (GPPGPDGLPGLPGFPGPRGPKGDTGLPGFPGLKGEQGEKGEPGAI) are triple-helical region 4 (COL4). Residues 827–840 (PDGLPGLPGFPGPR) show a composition bias toward pro residues. A disordered region spans residues 827–864 (PDGLPGLPGFPGPRGPKGDTGLPGFPGLKGEQGEKGEP). Residues 868–878 (LTEDIPLERLM) are nonhelical region 5 (NC5). The region spanning 879–927 (GKKGEPGMHGAPGPMGPKGPPGHKGEFGLPGRPGRPGLNGLKGTKGDPG) is the Collagen-like 4 domain. The tract at residues 879–949 (GKKGEPGMHG…PGPPGPPGAV (71 aa)) is triple-helical region 5 (COL5). Residues 950–983 (INIKGAIFPIPVRPHCKMPVDTAHPGSPELITFH) form a nonhelical region 6 (NC6) region. Residues 984-1013 (GVKGEKGSWGLPGSKGEKGDQGAQGPPGPP) form a triple-helical region 6 (COL6) region. 2 disordered regions span residues 988-1016 (EKGSWGLPGSKGEKGDQGAQGPPGPPLDL) and 1029-1133 (ENGD…GSRN). The tract at residues 1014–1027 (LDLAYLRHFLNNLK) is nonhelical region 7 (NC7). The triple-helical region 7 (COL7) stretch occupies residues 1028–1045 (GENGDKGFKGEKGEKGDI). A compositionally biased stretch (basic and acidic residues) spans 1029-1044 (ENGDKGFKGEKGEKGD). N1046 is a glycosylation site (N-linked (GlcNAc...) asparagine). Residues 1046–1052 (NGSFLMS) are nonhelical region 8 (NC8). A triple-helical region 8 (COL8) region spans residues 1053-1107 (GPPGLPGNPGPAGQKGETVVGPQGPPGAPGLPGPPGFGRPGDPGPPGPPGPPGPP). 2 stretches are compositionally biased toward pro residues: residues 1075–1107 (QGPPGAPGLPGPPGFGRPGDPGPPGPPGPPGPP) and 1117–1126 (PGPPGPPGQP). The tract at residues 1108 to 1117 (AILGAAVALP) is nonhelical region 9 (NC9). Residues 1118–1132 (GPPGPPGQPGLPGSR) form a triple-helical region 9 (COL9) region. Residues 1133 to 1388 (NLVTAFSNMD…ENSFMTDARK (256 aa)) form a nonhelical region 10 (NC10) region. 2 disulfides stabilise this stretch: C1237/C1377 and C1339/C1369.

Belongs to the multiplexin collagen family. In terms of assembly, trimer; disulfide-linked. Interacts moderately with EFEMP2. Prolines at the third position of the tripeptide repeating unit (G-X-Y) are hydroxylated in some or all of the chains. In terms of processing, O-glycosylated; with core 1 or possibly core 8 glycans. Contains chondroitin sulfate. In terms of tissue distribution, detected in fibroblasts and urine (at protein level). Detected in placenta (at protein level). Expressed predominantly in internal organs such as adrenal gland, pancreas and kidney.

Its subcellular location is the secreted. It is found in the extracellular space. The protein resides in the extracellular matrix. Structural protein that stabilizes microvessels and muscle cells, both in heart and in skeletal muscle. In terms of biological role, restin potently inhibits angiogenesis. The protein is Collagen alpha-1(XV) chain (COL15A1) of Homo sapiens (Human).